Consider the following 93-residue polypeptide: Insertion element ISR1 uncharacterized 11 kDa protein A1 (93 aa).

Disordered regions lie at residues 14–33 (RRAR…QERR) and 68–93 (RRRA…SAGR).

The sequence is that of Insertion element ISR1 uncharacterized 11 kDa protein A1 from Rhizobium sp.